We begin with the raw amino-acid sequence, 694 residues long: Polyribonucleotide nucleotidyltransferase (694 aa).

Residues aspartate 485 and aspartate 491 each contribute to the Mg(2+) site. Residues 552-611 (PRIETMQIKPNKIATVIGPGGKQIRQIIEEAGVQIDINDSGLVSISASSPQAIEKAKSII) form the KH domain. Residues 621–689 (GKIYEGRVTS…EKGQYKLSHK (69 aa)) enclose the S1 motif domain.

Belongs to the polyribonucleotide nucleotidyltransferase family. The cofactor is Mg(2+).

The protein localises to the cytoplasm. It carries out the reaction RNA(n+1) + phosphate = RNA(n) + a ribonucleoside 5'-diphosphate. Involved in mRNA degradation. Catalyzes the phosphorolysis of single-stranded polyribonucleotides processively in the 3'- to 5'-direction. The polypeptide is Polyribonucleotide nucleotidyltransferase (Chlamydia felis (strain Fe/C-56) (Chlamydophila felis)).